A 463-amino-acid chain; its full sequence is ATP synthase subunit beta (463 aa).

152–159 (GGAGVGKT) is an ATP binding site.

This sequence belongs to the ATPase alpha/beta chains family. In terms of assembly, F-type ATPases have 2 components, CF(1) - the catalytic core - and CF(0) - the membrane proton channel. CF(1) has five subunits: alpha(3), beta(3), gamma(1), delta(1), epsilon(1). CF(0) has three main subunits: a(1), b(2) and c(9-12). The alpha and beta chains form an alternating ring which encloses part of the gamma chain. CF(1) is attached to CF(0) by a central stalk formed by the gamma and epsilon chains, while a peripheral stalk is formed by the delta and b chains.

It localises to the cell membrane. The enzyme catalyses ATP + H2O + 4 H(+)(in) = ADP + phosphate + 5 H(+)(out). In terms of biological role, produces ATP from ADP in the presence of a proton gradient across the membrane. The catalytic sites are hosted primarily by the beta subunits. In Clostridium botulinum (strain Alaska E43 / Type E3), this protein is ATP synthase subunit beta.